Consider the following 71-residue polypeptide: Disintegrin horridistatin-2 (71 aa).

The 71-residue stretch at 1–71 (GEECDCGSPA…ADCPRNGLYG (71 aa)) folds into the Disintegrin domain. 6 disulfide bridges follow: C4-C19, C6-C14, C13-C36, C27-C33, C32-C57, and C45-C64. Residues 49-51 (RGD) carry the Cell attachment site motif.

This sequence belongs to the venom metalloproteinase (M12B) family. P-II subfamily. P-IIa sub-subfamily. Monomer (disintegrin). In terms of tissue distribution, expressed by the venom gland.

It localises to the secreted. Functionally, inhibits ADP-induced platelet aggregation (IC(50) is 16.2 nM) by binding to alpha-IIb/beta-3 (ITGA2B/ITGB3). The chain is Disintegrin horridistatin-2 from Crotalus horridus (Timber rattlesnake).